The following is a 246-amino-acid chain: MAGHSKWANTKHRKAAQDAKRGKIFTKIIRELVTAARLGGGDPASNPRLRAAVDKALSNNMTRDTLNRAIARGVGGDEDANMETIIYEGYGPGGTAVMVECLSDNRNRTVAEVRHAFTKTGGNLGTDGSVSYLFSKKGVISFEKGDEDTIMEAALEAGAEDVVTYDDGAIDVYTAWEEMGAVRDALEAAGLKADAAEVSMIPSTKADMDAETAPKLLRLIDMLEDCDDVQEVYHNGEISDEVAATL.

This sequence belongs to the TACO1 family.

The protein resides in the cytoplasm. The polypeptide is Probable transcriptional regulatory protein KPK_1906 (Klebsiella pneumoniae (strain 342)).